A 115-amino-acid chain; its full sequence is MICRSPLIVVMLFVIAAHTVLALEIATRIDASETESPVSAQMTRVSYRPITSVDNKRFLRQETTFEKKLGVNDVHAVHAEERSALGKAKILGRDLLWFMSILGRFLIPRIGRRGP.

The signal sequence occupies residues 1–22 (MICRSPLIVVMLFVIAAHTVLA). The RxLR-dEER signature appears at 57–82 (RFLRQETTFEKKLGVNDVHAVHAEER).

Belongs to the RxLR effector family.

It localises to the secreted. The protein localises to the host cytoplasm. Its subcellular location is the host nucleus. Its function is as follows. Effector that acts as a broad suppressor of cell death to interrupt plant immunity. Inhibits cell death induced by cell death-inducing proteins, including the PAMP elicitor INF1 from P.infestans. This is Secreted RxLR effector protein 2 from Plasmopara viticola (Downy mildew of grapevine).